Here is a 480-residue protein sequence, read N- to C-terminus: tRNA-2-methylthio-N(6)-dimethylallyladenosine synthase (480 aa).

In terms of domain architecture, MTTase N-terminal spans 43-161 (KLYCLNTFGC…FPELLYSAMD (119 aa)). [4Fe-4S] cluster is bound by residues Cys52, Cys88, Cys122, Cys198, Cys202, and Cys205. One can recognise a Radical SAM core domain in the interval 184–414 (RKDGVKAWVT…LETQNRISKE (231 aa)). A TRAM domain is found at 417 to 480 (DTFLGKVVEV…TWSLEGSIVR (64 aa)).

It belongs to the methylthiotransferase family. MiaB subfamily. As to quaternary structure, monomer. [4Fe-4S] cluster is required as a cofactor.

The protein resides in the cytoplasm. The catalysed reaction is N(6)-dimethylallyladenosine(37) in tRNA + (sulfur carrier)-SH + AH2 + 2 S-adenosyl-L-methionine = 2-methylsulfanyl-N(6)-dimethylallyladenosine(37) in tRNA + (sulfur carrier)-H + 5'-deoxyadenosine + L-methionine + A + S-adenosyl-L-homocysteine + 2 H(+). Catalyzes the methylthiolation of N6-(dimethylallyl)adenosine (i(6)A), leading to the formation of 2-methylthio-N6-(dimethylallyl)adenosine (ms(2)i(6)A) at position 37 in tRNAs that read codons beginning with uridine. This chain is tRNA-2-methylthio-N(6)-dimethylallyladenosine synthase, found in Acetivibrio thermocellus (strain ATCC 27405 / DSM 1237 / JCM 9322 / NBRC 103400 / NCIMB 10682 / NRRL B-4536 / VPI 7372) (Clostridium thermocellum).